The sequence spans 557 residues: D-arabinono-1,4-lactone oxidase (557 aa).

Residues F25–K209 enclose the FAD-binding PCMH-type domain. FAD-binding positions include V58 to G61, H62 to S63, I144 to T148, I199, and L543 to K546. Position 62 is a pros-8alpha-FAD histidine (H62).

Belongs to the oxygen-dependent FAD-linked oxidoreductase family. FAD is required as a cofactor.

The catalysed reaction is D-arabinono-1,4-lactone + O2 = dehydro-D-arabinono-1,4-lactone + H2O2 + H(+). The enzyme catalyses L-galactono-1,4-lactone + O2 = L-ascorbate + H2O2 + H(+). It carries out the reaction L-gulono-1,4-lactone + O2 = L-ascorbate + H2O2 + H(+). It catalyses the reaction L-xylono-1,4-lactone + O2 = dehydro-L-arabinono-1,4-lactone + H2O2 + H(+). It functions in the pathway cofactor biosynthesis; D-erythroascorbate biosynthesis; dehydro-D-arabinono-1,4-lactone from D-arabinose: step 2/2. Functionally, D-arabinono-1,4-lactone oxidase that catalyzes the final step of biosynthesis of D-erythroascorbic acid, an important antioxidant and one of the virulence factors enhancing the pathogenicity. Is also able to oxidize L-galactono-1,4-lactone, L-xylono-1,4-lactone and L-gulono-1,4-lactone. This Candida albicans (strain SC5314 / ATCC MYA-2876) (Yeast) protein is D-arabinono-1,4-lactone oxidase.